Here is a 330-residue protein sequence, read N- to C-terminus: 4-hydroxythreonine-4-phosphate dehydrogenase (330 aa).

Substrate-binding residues include His136 and Thr137. A divalent metal cation-binding residues include His166, His211, and His266. Substrate-binding residues include Lys274, Asn283, and Arg292.

Belongs to the PdxA family. In terms of assembly, homodimer. Requires Zn(2+) as cofactor. Mg(2+) is required as a cofactor. Co(2+) serves as cofactor.

Its subcellular location is the cytoplasm. The catalysed reaction is 4-(phosphooxy)-L-threonine + NAD(+) = 3-amino-2-oxopropyl phosphate + CO2 + NADH. It functions in the pathway cofactor biosynthesis; pyridoxine 5'-phosphate biosynthesis; pyridoxine 5'-phosphate from D-erythrose 4-phosphate: step 4/5. In terms of biological role, catalyzes the NAD(P)-dependent oxidation of 4-(phosphooxy)-L-threonine (HTP) into 2-amino-3-oxo-4-(phosphooxy)butyric acid which spontaneously decarboxylates to form 3-amino-2-oxopropyl phosphate (AHAP). This Serratia proteamaculans (strain 568) protein is 4-hydroxythreonine-4-phosphate dehydrogenase.